The chain runs to 416 residues: Choline/ethanolaminephosphotransferase 1 (416 aa).

The segment at 1-20 is disordered; the sequence is MSGHRSTRKRCGDSHPESPV. Phosphoserine is present on Ser18. Thr40 bears the Phosphothreonine mark. Asn86 is a binding site for CDP-choline. The next 2 helical transmembrane spans lie at 89 to 108 and 116 to 133; these read TIIG…FYCP and LWAY…QSLD. Asp133 contacts Mg(2+). Asn144 carries N-linked (GlcNAc...) asparagine glycosylation. Glu151 lines the CDP-choline pocket. Asp154 contacts Mg(2+). His155 (proton acceptor) is an active-site residue. 8 helical membrane-spanning segments follow: residues 156-176, 180-199, 210-230, 246-267, 286-306, 315-334, 349-363, and 368-388; these read GCDS…VQLG, DWMF…AHWQ, IIDV…AVIG, MKLL…NYFR, VLSP…IYKK, HPCL…TNKL, TAFI…DQYF, and DEYI…IRYC. Asp158 serves as a coordination point for Mg(2+).

It belongs to the CDP-alcohol phosphatidyltransferase class-I family. Homodimer. Mg(2+) serves as cofactor. Requires Mn(2+) as cofactor.

The protein localises to the endoplasmic reticulum membrane. The protein resides in the nucleus membrane. It catalyses the reaction CDP-ethanolamine + a 1,2-diacyl-sn-glycerol = a 1,2-diacyl-sn-glycero-3-phosphoethanolamine + CMP + H(+). The catalysed reaction is CDP-choline + a 1,2-diacyl-sn-glycerol = a 1,2-diacyl-sn-glycero-3-phosphocholine + CMP + H(+). The enzyme catalyses 1-O-alkyl-2-acyl-sn-glycerol + CDP-choline = a 1-O-alkyl-2-acyl-sn-glycero-3-phosphocholine + CMP + H(+). It carries out the reaction a 1-O-(1Z-alkenyl)-2-acyl-sn-glycerol + CDP-choline = a 1-O-(1Z-alkenyl)-2-acyl-sn-glycero-3-phosphocholine + CMP + H(+). It catalyses the reaction 1,2-dioctanoyl-sn-glycerol + CDP-choline = 1,2-dioctanoyl-sn-glycero-3-phosphocholine + CMP + H(+). The catalysed reaction is 1,2-didecanoyl-sn-glycerol + CDP-choline = 1,2-didecanoyl-sn-glycero-3-phosphocholine + CMP + H(+). The enzyme catalyses CDP-choline + 1,2-di-(9Z-octadecenoyl)-sn-glycerol = 1,2-di-(9Z-octadecenoyl)-sn-glycero-3-phosphocholine + CMP + H(+). It carries out the reaction 1-hexadecanoyl-2-(9Z-octadecenoyl)-sn-glycerol + CDP-choline = 1-hexadecanoyl-2-(9Z-octadecenoyl)-sn-glycero-3-phosphocholine + CMP + H(+). It catalyses the reaction CDP-ethanolamine + 1,2-di-(9Z-octadecenoyl)-sn-glycerol = 1,2-di-(9Z-octadecenoyl)-sn-glycero-3-phosphoethanolamine + CMP + H(+). The catalysed reaction is 1-hexadecanoyl-2-(9Z-octadecenoyl)-sn-glycerol + CDP-ethanolamine = 1-hexadecanoyl-2-(9Z-octadecenoyl)-sn-glycero-3-phosphoethanolamine + CMP + H(+). The enzyme catalyses 1-hexadecanoyl-2-(4Z,7Z,10Z,13Z,16Z,19Z-docosahexaenoyl)-sn-glycerol + CDP-choline = 1-hexadecanoyl-2-(4Z,7Z,10Z,13Z,16Z,19Z-docosahexaenoyl)-sn-glycero-3-phosphocholine + CMP + H(+). It carries out the reaction 1,2-di-(9Z-hexadecenoyl)-sn-glycerol + CDP-choline = 1,2-di-(9Z-hexadecenoyl)-sn-glycero-3-phosphocholine + CMP + H(+). It catalyses the reaction 1,2-di-(9Z-hexadecenoyl)-sn-glycerol + CDP-ethanolamine = 1,2-di-(9Z-hexadecenoyl)-sn-glycero-3-phosphoethanolamine + CMP + H(+). The catalysed reaction is 1-O-hexadecyl-2-acetyl-sn-glycerol + CDP-choline = 1-O-hexadecyl-2-acetyl-sn-glycero-3-phosphocholine + CMP + H(+). The enzyme catalyses 1-O-hexadecyl-2-(5Z,8Z,11Z,14Z-eicosatetraenoyl)-sn-glycerol + CDP-choline = 1-O-hexadecyl-2-(5Z,8Z,11Z,14Z)-eicosatetraenoyl-sn-glycero-3-phosphocholine + CMP + H(+). The protein operates within phospholipid metabolism; phosphatidylethanolamine biosynthesis; phosphatidylethanolamine from ethanolamine: step 3/3. It functions in the pathway phospholipid metabolism; phosphatidylcholine biosynthesis; phosphatidylcholine from phosphocholine: step 2/2. Functionally, catalyzes both phosphatidylcholine and phosphatidylethanolamine biosynthesis from CDP-choline and CDP-ethanolamine, respectively. Involved in protein-dependent process of phospholipid transport to distribute phosphatidyl choline to the lumenal surface. Has a higher cholinephosphotransferase activity than ethanolaminephosphotransferase activity. In Mus musculus (Mouse), this protein is Choline/ethanolaminephosphotransferase 1.